The following is a 743-amino-acid chain: Catalase-peroxidase (743 aa).

Residues 1-22 are disordered; it reads MEKQSNDAAVAGAPNDHGAAKC. Positions 105–227 form a cross-link, tryptophyl-tyrosyl-methioninium (Trp-Tyr) (with M-253); sequence WHSAGTYRIT…LGAVQMGLIY (123 aa). His106 (proton acceptor) is an active-site residue. A cross-link (tryptophyl-tyrosyl-methioninium (Tyr-Met) (with W-105)) is located at residues 227-253; that stretch reads YVNPEGPNGNPDPVAAAKDIRETFFRM. Heme b is bound at residue His268.

It belongs to the peroxidase family. Peroxidase/catalase subfamily. Homodimer or homotetramer. The cofactor is heme b. Formation of the three residue Trp-Tyr-Met cross-link is important for the catalase, but not the peroxidase activity of the enzyme.

The catalysed reaction is H2O2 + AH2 = A + 2 H2O. It carries out the reaction 2 H2O2 = O2 + 2 H2O. Functionally, bifunctional enzyme with both catalase and broad-spectrum peroxidase activity. This is Catalase-peroxidase from Solibacter usitatus (strain Ellin6076).